A 115-amino-acid chain; its full sequence is Large ribosomal subunit protein P2y (115 aa).

Positions Ala-63–Glu-115 are disordered. Residues Glu-92 to Lys-102 are compositionally biased toward basic and acidic residues. Ser-105 is modified (phosphoserine).

This sequence belongs to the eukaryotic ribosomal protein P1/P2 family. As to quaternary structure, P1 and P2 exist as dimers at the large ribosomal subunit. Post-translationally, phosphorylated.

Its function is as follows. Plays an important role in the elongation step of protein synthesis. The sequence is that of Large ribosomal subunit protein P2y (RPP2B) from Arabidopsis thaliana (Mouse-ear cress).